Here is a 296-residue protein sequence, read N- to C-terminus: ATP synthase gamma chain (296 aa).

It belongs to the ATPase gamma chain family. F-type ATPases have 2 components, CF(1) - the catalytic core - and CF(0) - the membrane proton channel. CF(1) has five subunits: alpha(3), beta(3), gamma(1), delta(1), epsilon(1). CF(0) has three main subunits: a, b and c.

It is found in the cell inner membrane. Functionally, produces ATP from ADP in the presence of a proton gradient across the membrane. The gamma chain is believed to be important in regulating ATPase activity and the flow of protons through the CF(0) complex. In Methylorubrum extorquens (strain CM4 / NCIMB 13688) (Methylobacterium extorquens), this protein is ATP synthase gamma chain.